The following is a 333-amino-acid chain: uncharacterized protein (333 aa).

The tract at residues 234 to 333 is disordered; the sequence is PPLAPTSAPA…GLSSEFDSDD (100 aa). Residues 251 to 265 are compositionally biased toward pro residues; sequence VPPPVPAPPTPPPQE. Residues 324–333 show a composition bias toward polar residues; it reads GLSSEFDSDD.

The protein localises to the cell projection. The protein resides in the cilium. Its subcellular location is the flagellum. This is an uncharacterized protein from Homo sapiens (Human).